Reading from the N-terminus, the 486-residue chain is Argininosuccinate lyase (486 aa).

The protein belongs to the lyase 1 family. Argininosuccinate lyase subfamily.

It is found in the cytoplasm. The enzyme catalyses 2-(N(omega)-L-arginino)succinate = fumarate + L-arginine. It participates in amino-acid biosynthesis; L-arginine biosynthesis; L-arginine from L-ornithine and carbamoyl phosphate: step 3/3. This Acidovorax ebreus (strain TPSY) (Diaphorobacter sp. (strain TPSY)) protein is Argininosuccinate lyase.